A 434-amino-acid polypeptide reads, in one-letter code: MEDLFSPSILPPAPNISVPILLGWGLNLTLGQGAPASGPPSRRVRLVFLGVILVVAVAGNTTVLCRLCGGGGPWAGPKRRKMDFLLVQLALADLYACGGTALSQLAWELLGEPRAATGDLACRFLQLLQASGRGASAHLVVLIALERRRAVRLPHGRPLPARALAALGWLLALLLALPPAFVVRGDSPSPLPPPPPPTSLQPGAPPAARAWPGERRCHGIFAPLPRWHLQVYAFYEAVAGFVAPVTVLGVACGHLLSVWWRHRPQAPAAAAPWSASPGRAPAPSALPRAKVQSLKMSLLLALLFVGCELPYFAARLAAAWSSGPAGDWEGEGLSAALRVVAMANSALNPFVYLFFQAGDCRLRRQLRKRLGSLCCAPQGGAEDEEGPRGHQALYRQRWPHPHYHHARREPLDEGGLRPPPPRPRPLPCSCESAF.

Topologically, residues 1–3 (MED) are extracellular. Residues 4-24 (LFSPSILPPAPNISVPILLGW) form a helical membrane-spanning segment. The Cytoplasmic segment spans residues 25-43 (GLNLTLGQGAPASGPPSRR). A helical transmembrane segment spans residues 44–64 (VRLVFLGVILVVAVAGNTTVL). Residues 65 to 81 (CRLCGGGGPWAGPKRRK) are Extracellular-facing. A helical membrane pass occupies residues 82–102 (MDFLLVQLALADLYACGGTAL). Over 103–162 (SQLAWELLGEPRAATGDLACRFLQLLQASGRGASAHLVVLIALERRRAVRLPHGRPLPAR) the chain is Cytoplasmic. The chain crosses the membrane as a helical span at residues 163–183 (ALAALGWLLALLLALPPAFVV). The Extracellular portion of the chain corresponds to 184–237 (RGDSPSPLPPPPPPTSLQPGAPPAARAWPGERRCHGIFAPLPRWHLQVYAFYEA). Positions 188–210 (PSPLPPPPPPTSLQPGAPPAARA) are disordered. Pro residues predominate over residues 189–205 (SPLPPPPPPTSLQPGAP). A helical transmembrane segment spans residues 238-258 (VAGFVAPVTVLGVACGHLLSV). The Cytoplasmic segment spans residues 259-293 (WWRHRPQAPAAAAPWSASPGRAPAPSALPRAKVQS). Residues 294–314 (LKMSLLLALLFVGCELPYFAA) traverse the membrane as a helical segment. The Extracellular segment spans residues 315–334 (RLAAAWSSGPAGDWEGEGLS). A helical transmembrane segment spans residues 335 to 355 (AALRVVAMANSALNPFVYLFF). At 356 to 434 (QAGDCRLRRQ…PLPCSCESAF (79 aa)) the chain is on the cytoplasmic side. Residues 398–407 (WPHPHYHHAR) show a composition bias toward basic residues. Residues 398-434 (WPHPHYHHARREPLDEGGLRPPPPRPRPLPCSCESAF) form a disordered region. The span at 417-426 (RPPPPRPRPL) shows a compositional bias: pro residues.

The protein belongs to the G-protein coupled receptor 1 family.

The protein resides in the cell membrane. Functionally, orphan receptor. This Homo sapiens (Human) protein is Probable G-protein coupled receptor 150 (GPR150).